Here is a 289-residue protein sequence, read N- to C-terminus: Phosphate import ATP-binding protein PstB 2 (289 aa).

The ABC transporter domain maps to 37–276; that stretch reads LHAKVEAFYY…HTPVIFQNPT (240 aa). 69-76 contacts ATP; the sequence is GPSGCGKS.

It belongs to the ABC transporter superfamily. Phosphate importer (TC 3.A.1.7) family. In terms of assembly, the complex is composed of two ATP-binding proteins (PstB), two transmembrane proteins (PstC and PstA) and a solute-binding protein (PstS).

Its subcellular location is the cell inner membrane. The enzyme catalyses phosphate(out) + ATP + H2O = ADP + 2 phosphate(in) + H(+). Part of the ABC transporter complex PstSACB involved in phosphate import. Responsible for energy coupling to the transport system. The polypeptide is Phosphate import ATP-binding protein PstB 2 (Trichormus variabilis (strain ATCC 29413 / PCC 7937) (Anabaena variabilis)).